The chain runs to 281 residues: NADPH-dependent 7-cyano-7-deazaguanine reductase (281 aa).

81-83 lines the substrate pocket; that stretch reads IES. 83–84 provides a ligand contact to NADPH; it reads SK. Residue cysteine 188 is the Thioimide intermediate of the active site. Aspartate 195 functions as the Proton donor in the catalytic mechanism. A substrate-binding site is contributed by 227 to 228; the sequence is HE. 256–257 provides a ligand contact to NADPH; it reads RG.

Belongs to the GTP cyclohydrolase I family. QueF type 2 subfamily. As to quaternary structure, homodimer.

Its subcellular location is the cytoplasm. It carries out the reaction 7-aminomethyl-7-carbaguanine + 2 NADP(+) = 7-cyano-7-deazaguanine + 2 NADPH + 3 H(+). Its pathway is tRNA modification; tRNA-queuosine biosynthesis. Its function is as follows. Catalyzes the NADPH-dependent reduction of 7-cyano-7-deazaguanine (preQ0) to 7-aminomethyl-7-deazaguanine (preQ1). The polypeptide is NADPH-dependent 7-cyano-7-deazaguanine reductase (Polaromonas naphthalenivorans (strain CJ2)).